We begin with the raw amino-acid sequence, 211 residues long: Probable GTP-binding protein EngB (211 aa).

An EngB-type G domain is found at 26–200 (SGIEVAFAGR…RQKLDNWFST (175 aa)). GTP is bound by residues 34–41 (GRSNAGKS), 61–65 (GRTQL), 79–82 (DLPG), 146–149 (TKAD), and 179–181 (FSS). Serine 41 and threonine 63 together coordinate Mg(2+).

It belongs to the TRAFAC class TrmE-Era-EngA-EngB-Septin-like GTPase superfamily. EngB GTPase family. Mg(2+) serves as cofactor.

Necessary for normal cell division and for the maintenance of normal septation. In Pectobacterium carotovorum subsp. carotovorum (strain PC1), this protein is Probable GTP-binding protein EngB.